Reading from the N-terminus, the 97-residue chain is uncharacterized protein (97 aa).

A Stress-response A/B barrel domain is found at 2–95 (IRHLVLFKLN…EFATWVIADY (94 aa)).

This is an uncharacterized protein from Streptomyces coelicolor (strain ATCC BAA-471 / A3(2) / M145).